The primary structure comprises 165 residues: Fatty acid-binding protein homolog 3 (165 aa).

A signal peptide spans 1 to 19 (MNLYLTLFSFCFLAIMAEA).

It belongs to the calycin superfamily. Fatty-acid binding protein (FABP) family. Expressed in presumptive hypodermal cells by the comma stage and in posterior body wall muscle cells by the two-fold stage. From L1 to adult stages, expression continues in body wall muscle cells adjacent to the pseudocoelom, while hypodermal expression is extinguished.

It is found in the secreted. May play a role in sequestering potentially toxic fatty acids and their peroxidation products, or it may be involved in the maintenance of the impermeable lipid layer of the eggshell. The polypeptide is Fatty acid-binding protein homolog 3 (lbp-3) (Caenorhabditis elegans).